The following is a 295-amino-acid chain: Ribosomal RNA small subunit methyltransferase H (295 aa).

Residues 35–37 (GGH), Glu-55, Phe-82, Asp-103, and Gln-110 contribute to the S-adenosyl-L-methionine site.

The protein belongs to the methyltransferase superfamily. RsmH family.

The protein resides in the cytoplasm. It catalyses the reaction cytidine(1402) in 16S rRNA + S-adenosyl-L-methionine = N(4)-methylcytidine(1402) in 16S rRNA + S-adenosyl-L-homocysteine + H(+). Functionally, specifically methylates the N4 position of cytidine in position 1402 (C1402) of 16S rRNA. The sequence is that of Ribosomal RNA small subunit methyltransferase H from Desulfotalea psychrophila (strain LSv54 / DSM 12343).